A 126-amino-acid chain; its full sequence is Lymphocyte antigen 6E (126 aa).

A signal peptide spans 1–20 (MKAFLFAVLAAVLCVERAHT). Residues 21–98 (LICFSCSDAS…CCDSFLCNIS (78 aa)) enclose the UPAR/Ly6 domain. Disulfide bonds link C23/C48, C26/C35, C41/C69, C73/C89, and C90/C95. Residue N96 is glycosylated (N-linked (GlcNAc...) asparagine). The GPI-anchor amidated serine moiety is linked to residue S98. Positions 99 to 126 (GSSSVKASYAVLALGILVSFVYVLRARE) are cleaved as a propeptide — removed in mature form.

Expressed by thymic blast cells.

It localises to the cell membrane. This chain is Lymphocyte antigen 6E (LY6E), found in Gallus gallus (Chicken).